A 283-amino-acid polypeptide reads, in one-letter code: uncharacterized protein (283 aa).

An HTH rpiR-type domain is found at 3–79; sequence TGGLAIIQSM…MRVAGDLAKP (77 aa). The segment at residues 39–58 is a DNA-binding region (H-T-H motif); the sequence is VNEISALANSSDAAVIRLCK. One can recognise an SIS domain in the interval 123–264; that stretch reads AVSLLLKAHT…FLGMAAEQYE (142 aa).

This is an uncharacterized protein from Bacillus subtilis (strain 168).